The sequence spans 932 residues: F-box protein COS111 (932 aa).

The segment at 29-63 (VSAKHRPSSTGVYGHDASTVDHASRSNNNLNLTRS) is disordered. A compositionally biased stretch (low complexity) spans 53–63 (RSNNNLNLTRS). The F-box domain maps to 146–193 (RKEISDLPDEVLRNILSNVKDDQRTLVNCLYVNKAFYNATKPTLYERP). The span at 346–358 (LSEGKSSDNGNNG) shows a compositional bias: polar residues. 4 disordered regions span residues 346–369 (LSEGKSSDNGNNGKRQRSNSSVSS), 389–450 (TLSG…SNWF), 470–500 (ISSKKDEQQNEESAQTAQKIETPIIKRTEPF), and 863–893 (SVLPEDVPEDNNADDTNNGENTIAQPFSNDP). 2 stretches are compositionally biased toward low complexity: residues 395-431 (NNSSKTQSKGKSSSSPGNPNDSSGEQDSIISSSSQID) and 438-447 (TSSKSTSSTS). Over residues 876–890 (DDTNNGENTIAQPFS) the composition is skewed to polar residues.

Its function is as follows. F-box protein probably involved in ubiquitin conjugation pathway. This chain is F-box protein COS111 (COS111), found in Candida glabrata (strain ATCC 2001 / BCRC 20586 / JCM 3761 / NBRC 0622 / NRRL Y-65 / CBS 138) (Yeast).